We begin with the raw amino-acid sequence, 20 residues long: MELGLEPADDFKEKLIKLSA.

This is an uncharacterized protein from Serratia marcescens.